Reading from the N-terminus, the 259-residue chain is tRNA pseudouridine synthase A (259 aa).

D51 serves as the catalytic Nucleophile. Substrate is bound at residue Y109.

Belongs to the tRNA pseudouridine synthase TruA family. Homodimer.

The catalysed reaction is uridine(38/39/40) in tRNA = pseudouridine(38/39/40) in tRNA. In terms of biological role, formation of pseudouridine at positions 38, 39 and 40 in the anticodon stem and loop of transfer RNAs. This is tRNA pseudouridine synthase A from Colwellia psychrerythraea (strain 34H / ATCC BAA-681) (Vibrio psychroerythus).